We begin with the raw amino-acid sequence, 390 residues long: Protein arginine N-methyltransferase 1.1 (390 aa).

The span at 1–10 (MTKNSNHDEN) shows a compositional bias: basic and acidic residues. Residues 1 to 59 (MTKNSNHDENEFISFEPNQNTKIRFEDADEDEVAEGSGVAGEETPQDESMFDAGESADT) are disordered. One can recognise an SAM-dependent MTase PRMT-type domain in the interval 69-390 (ADYYFDSYSH…ISRTQHYKMR (322 aa)). Catalysis depends on residues Glu181 and Glu190.

Belongs to the class I-like SAM-binding methyltransferase superfamily. Protein arginine N-methyltransferase family. In terms of assembly, interacts with PRMT12, MBD7 and FIB2.

It localises to the nucleus. The protein resides in the cytoplasm. It carries out the reaction L-arginyl-[protein] + 2 S-adenosyl-L-methionine = N(omega),N(omega)-dimethyl-L-arginyl-[protein] + 2 S-adenosyl-L-homocysteine + 2 H(+). Functionally, methylates (mono and asymmetric dimethylation) the guanidino nitrogens of arginyl residues present in a glycine and arginine-rich domain. Type I arginine methyltransferase active on both histones and non-histone proteins. Required for leaves and flowers development. Mediates the methylation of MBD7 and MED36A. The polypeptide is Protein arginine N-methyltransferase 1.1 (PRMT11) (Arabidopsis thaliana (Mouse-ear cress)).